The sequence spans 1887 residues: ATP-dependent DNA helicase tlh1 (1887 aa).

The segment covering 329–347 (NQQRREQQDKGENKKRQDD) has biased composition (basic and acidic residues). Disordered regions lie at residues 329-372 (NQQR…EEEE), 504-552 (ERKE…NTDD), and 1110-1135 (MVEG…EMTQ). Composition is skewed to acidic residues over residues 360 to 372 (LEDD…EEEE) and 524 to 533 (SAEDDNDNDN). Residues 540 to 549 (NNNNNNNNTN) show a composition bias toward low complexity. Basic and acidic residues predominate over residues 1112-1131 (EGDKEKDKTNEEKNKDEVKA). The 176-residue stretch at 1200–1375 (YFSLLNRMNL…RQTFCTNFYV (176 aa)) folds into the Helicase ATP-binding domain. ATP contacts are provided by residues 1213 to 1220 (LPTGGGKS) and 1240 to 1247 (MNMVTLVL). A DEAH box motif is present at residues 1322-1325 (DEAH). In terms of domain architecture, Helicase C-terminal spans 1401-1559 (DLRTLMKRTK…CVRSFLASEM (159 aa)). The disordered stretch occupies residues 1613–1643 (YNASFSSSPPPQPGNSSGMSAMNTNTTSTTP). A compositionally biased stretch (low complexity) spans 1626 to 1642 (GNSSGMSAMNTNTTSTT). The segment at 1804-1821 (STCYKCGKADHNLRECKL) adopts a CCHC-type zinc-finger fold.

The protein belongs to the helicase family. RecQ subfamily.

The enzyme catalyses Couples ATP hydrolysis with the unwinding of duplex DNA by translocating in the 3'-5' direction.. The catalysed reaction is ATP + H2O = ADP + phosphate + H(+). In terms of biological role, a probable ATP-dependent 3'-5' DNA helicase. Has a role in telomerase-independent telomere maintenance. The sequence is that of ATP-dependent DNA helicase tlh1 from Schizosaccharomyces pombe (strain 972 / ATCC 24843) (Fission yeast).